The sequence spans 176 residues: Salivary antigen 1 (176 aa).

Residues 1–18 (MNYCFLVFLVYLVFAVNG) form the signal peptide.

It is found in the secreted. The sequence is that of Salivary antigen 1 from Ctenocephalides felis (Cat flea).